The following is a 321-amino-acid chain: Probable protein phosphatase 2C 44 (321 aa).

Disordered stretches follow at residues 1-36 and 51-70; these read MVGRMERQSASSSASCSPSSSAAGTSSSSSACGGKK and NSSSTDTGKGRSKQSSNKVT. Residues 9–31 are compositionally biased toward low complexity; sequence SASSSASCSPSSSAAGTSSSSSA. Over residues 51 to 69 the composition is skewed to polar residues; it reads NSSSTDTGKGRSKQSSNKV. Residues 70-319 form the PPM-type phosphatase domain; it reads THGFHLVEGK…DDISCIVIRF (250 aa). 4 residues coordinate Mn(2+): D107, G108, D271, and D310.

The protein belongs to the PP2C family. The cofactor is Mg(2+). Mn(2+) serves as cofactor.

The catalysed reaction is O-phospho-L-seryl-[protein] + H2O = L-seryl-[protein] + phosphate. The enzyme catalyses O-phospho-L-threonyl-[protein] + H2O = L-threonyl-[protein] + phosphate. This chain is Probable protein phosphatase 2C 44, found in Oryza sativa subsp. japonica (Rice).